Consider the following 725-residue polypeptide: Catalase-peroxidase (725 aa).

Positions 99–227 form a cross-link, tryptophyl-tyrosyl-methioninium (Trp-Tyr) (with M-253); sequence WHAAGTYRIA…LAAVMMGLIY (129 aa). The active-site Proton acceptor is the H100. The tryptophyl-tyrosyl-methioninium (Tyr-Met) (with W-99) cross-link spans 227 to 253; the sequence is YVNPEGVDGNPDPLKTAHDIRITFSRM. A heme b-binding site is contributed by H268.

The protein belongs to the peroxidase family. Peroxidase/catalase subfamily. Homodimer or homotetramer. The cofactor is heme b. In terms of processing, formation of the three residue Trp-Tyr-Met cross-link is important for the catalase, but not the peroxidase activity of the enzyme.

It carries out the reaction H2O2 + AH2 = A + 2 H2O. It catalyses the reaction 2 H2O2 = O2 + 2 H2O. Functionally, bifunctional enzyme with both catalase and broad-spectrum peroxidase activity. This is Catalase-peroxidase from Picosynechococcus sp. (strain ATCC 27264 / PCC 7002 / PR-6) (Agmenellum quadruplicatum).